A 238-amino-acid polypeptide reads, in one-letter code: Large ribosomal subunit protein uL2 (238 aa).

Disordered regions lie at residues 1-34 and 197-238; these read MGKR…PPLS and VDHP…RRKR. A compositionally biased stretch (basic residues) spans 224 to 238; it reads KVGHIAARRTGRRKR.

The protein belongs to the universal ribosomal protein uL2 family. As to quaternary structure, part of the 50S ribosomal subunit. Forms a bridge to the 30S subunit in the 70S ribosome.

In terms of biological role, one of the primary rRNA binding proteins. Required for association of the 30S and 50S subunits to form the 70S ribosome, for tRNA binding and peptide bond formation. It has been suggested to have peptidyltransferase activity; this is somewhat controversial. Makes several contacts with the 16S rRNA in the 70S ribosome. This chain is Large ribosomal subunit protein uL2, found in Aeropyrum pernix (strain ATCC 700893 / DSM 11879 / JCM 9820 / NBRC 100138 / K1).